Consider the following 202-residue polypeptide: AFG2-interacting ribosome maturation factor (202 aa).

In terms of assembly, part of the 55LCC heterohexameric ATPase complex. Does not associate with pre-60S ribosomal particles.

The protein localises to the nucleus. Its subcellular location is the cytoplasm. Functionally, part of the 55LCC heterohexameric ATPase complex which is chromatin-associated and promotes replisome proteostasis to maintain replication fork progression and genome stability. Required for replication fork progression, sister chromatid cohesion, and chromosome stability. The ATPase activity is specifically enhanced by replication fork DNA and is coupled to cysteine protease-dependent cleavage of replisome substrates in response to replication fork damage. Uses ATPase activity to process replisome substrates in S-phase, facilitating their proteolytic turnover from chromatin to ensure DNA replication and mitotic fidelity. Involved in the cytoplasmic maturation steps of pre-60S ribosomal particles by promoting the release of shuttling protein RSL24D1/RLP24 from the pre-ribosomal particles. Plays an essential role in early embryonic development. This is AFG2-interacting ribosome maturation factor (airim) from Danio rerio (Zebrafish).